The primary structure comprises 322 residues: Protein farnesyltransferase/geranylgeranyltransferase type-1 subunit alpha (322 aa).

The disordered stretch occupies residues 1–27 (MSSSEEDDGYVPFSKRPEWSDVKPLAQ). PFTA repeat units follow at residues 62-95 (RVLD…EQDE), 103-136 (QEMN…IGSD), 138-171 (KEKE…RDWN), 173-205 (ELAM…NPSP), 213-246 (REVE…KIST), and 287-321 (NSLN…LKLI).

The protein belongs to the protein prenyltransferase subunit alpha family. In terms of assembly, heterodimer of fntA and fntB (farnesyltransferase). Heterodimer of an alpha and a beta subunit. Mg(2+) serves as cofactor.

The catalysed reaction is L-cysteinyl-[protein] + (2E,6E)-farnesyl diphosphate = S-(2E,6E)-farnesyl-L-cysteinyl-[protein] + diphosphate. The enzyme catalyses geranylgeranyl diphosphate + L-cysteinyl-[protein] = S-geranylgeranyl-L-cysteinyl-[protein] + diphosphate. Functionally, catalyzes the transfer of a farnesyl or geranyl-geranyl moiety from farnesyl or geranyl-geranyl diphosphate to a cysteine at the fourth position from the C-terminus of several proteins having the C-terminal sequence Cys-aliphatic-aliphatic-X. The alpha subunit is thought to participate in a stable complex with the substrate. The beta subunit binds the peptide substrate. The chain is Protein farnesyltransferase/geranylgeranyltransferase type-1 subunit alpha (fntA) from Dictyostelium discoideum (Social amoeba).